The sequence spans 348 residues: Protein RecA (348 aa).

65 to 72 (GPESSGKT) serves as a coordination point for ATP.

It belongs to the RecA family.

The protein localises to the cytoplasm. Its function is as follows. Can catalyze the hydrolysis of ATP in the presence of single-stranded DNA, the ATP-dependent uptake of single-stranded DNA by duplex DNA, and the ATP-dependent hybridization of homologous single-stranded DNAs. It interacts with LexA causing its activation and leading to its autocatalytic cleavage. The sequence is that of Protein RecA from Alteromonas mediterranea (strain DSM 17117 / CIP 110805 / LMG 28347 / Deep ecotype).